The sequence spans 502 residues: RNA polymerase sigma factor sigA (502 aa).

Residues 1 to 23 (MATAAVIGLNTGKRLLSSSFYHS) constitute a chloroplast transit peptide. Polar residues predominate over residues 57–71 (YSPSFPSSNRHTQSA). The disordered stretch occupies residues 57 to 92 (YSPSFPSSNRHTQSAKALKESVDVASTEKPWLPNGT). T170 carries the phosphothreonine modification. Positions 287–300 (DLVQGGLIGLLRGI) match the Polymerase core binding motif. A DNA-binding region (H-T-H motif) is located at residues 461–480 (WEDISKRIGLSRERVRQVGL).

This sequence belongs to the sigma-70 factor family. Interacts with SIB1 in chloroplast. Binds to CSK. The phosphorylation of Thr-170 mediated by oxidative conditions of plastoquinone (PQ) changes the promoter specificity, selectively inhibiting the transcription of the psaA gene, which encodes a PS-I protein. Phosphorylation of the holoenzyme occurs in the dark. This phosphorylation in response to plastoquinone redox state modification is mediated by CSK. As to expression, highly expressed in leaves, and to a lesser extent in roots. Expressed in old seedlings (8 days), cotyledons, hypocotyls, leaves, sepals and siliques.

It is found in the plastid. It localises to the chloroplast. Essential protein. Sigma factors are initiation factors that promote the attachment of plastid-encoded RNA polymerase (PEP) to specific initiation sites and are then released. Controls the transcription of the psaA gene and thus modulates photosystem stoichiometry. Thereby maintains a harmonious electron flow and photosynthetic efficiency. This Arabidopsis thaliana (Mouse-ear cress) protein is RNA polymerase sigma factor sigA (SIGA).